A 607-amino-acid polypeptide reads, in one-letter code: MTVPLDRIRNFSIIAHIDHGKSTLADRLIQRTGGLTDREMSAQVLDNMDIEKERGITIKAQTVRLDYKAKDGQDYVLNLMDTPGHVDFAYEVSRSLAACEGALLVVDAAQGVEAQTLANVYQSIEHDHEIVPVINKIDLPAAEPDKVKAEIEDIIGLPADDAVLASAKSGIGIDEILEAIVARIPAPKGDPAAPLKAMLVDSWYDPYLGVVILIRVVEGTIRKGQQIKFMQADTVHLVDRVGCFRPKIEQLGEMGPGEIGFITAQIKEVSQTAVGDTITDARKPTAEPLPGFKEVQPVVFCGLFPVDAADFEKLRESLYKLRLNDASFSFEAESSAALGFGFRCGFLGLLHLEIIQERLTREYDLDLITTAPSVVYRLHLSHSKTEDAKVIELHNPADMPDPNRIDMIEEPWIEATIYVPDEYLGSLLKLCQDRRGIQKNLTYVGGRAQITYELPLNEVVFDFYDRLKSISRGYASFDYHQIGYREGDLVKMSIMVNGEPVDALSMIVHRAAAEARGRHMCERLKDLIPRHLFKIPVQAAIGGKVIARETIAAMRKDVTAKCYGGDATRKRKLLEKQKEGKKRMREYGNVNIPQEAFIAALRMGDEG.

Residues 6-188 (DRIRNFSIIA…AIVARIPAPK (183 aa)) enclose the tr-type G domain. GTP contacts are provided by residues 18–23 (DHGKST) and 135–138 (NKID).

Belongs to the TRAFAC class translation factor GTPase superfamily. Classic translation factor GTPase family. LepA subfamily.

The protein resides in the cell inner membrane. It catalyses the reaction GTP + H2O = GDP + phosphate + H(+). Its function is as follows. Required for accurate and efficient protein synthesis under certain stress conditions. May act as a fidelity factor of the translation reaction, by catalyzing a one-codon backward translocation of tRNAs on improperly translocated ribosomes. Back-translocation proceeds from a post-translocation (POST) complex to a pre-translocation (PRE) complex, thus giving elongation factor G a second chance to translocate the tRNAs correctly. Binds to ribosomes in a GTP-dependent manner. This is Elongation factor 4 from Rhizorhabdus wittichii (strain DSM 6014 / CCUG 31198 / JCM 15750 / NBRC 105917 / EY 4224 / RW1) (Sphingomonas wittichii).